Reading from the N-terminus, the 184-residue chain is UPF0149 protein PA14_69010 (184 aa).

Belongs to the UPF0149 family.

This Pseudomonas aeruginosa (strain UCBPP-PA14) protein is UPF0149 protein PA14_69010.